A 276-amino-acid chain; its full sequence is 2,3,4,5-tetrahydropyridine-2,6-dicarboxylate N-succinyltransferase (276 aa).

Residues R100 and D137 each coordinate substrate.

It belongs to the transferase hexapeptide repeat family. In terms of assembly, homotrimer.

It is found in the cytoplasm. The catalysed reaction is (S)-2,3,4,5-tetrahydrodipicolinate + succinyl-CoA + H2O = (S)-2-succinylamino-6-oxoheptanedioate + CoA. Its pathway is amino-acid biosynthesis; L-lysine biosynthesis via DAP pathway; LL-2,6-diaminopimelate from (S)-tetrahydrodipicolinate (succinylase route): step 1/3. The protein is 2,3,4,5-tetrahydropyridine-2,6-dicarboxylate N-succinyltransferase of Zymomonas mobilis subsp. mobilis (strain ATCC 31821 / ZM4 / CP4).